The following is a 623-amino-acid chain: MAHVRGLQLPGCLALAALCTLVHSQHVFLAPQQALSLLQRVRRANSVFLEEVRKGNLERECVEETCSYEEAFEALESSTATDVFWAKYTACETARTPRDKLAACLEGNCAEGLGTNYRGHLNITQSGIQCQLWRSRYPHKPEINSTTHPGADLQENFCRNPDSSTTGPWCYTTDPTVRRQECSIPVCGQDQVTVAMTPRSEGSGVNLSPPSEQCVPDRGQQYQGRLAVTTHGLPCLAWASAQAKALSKHQDFNSAVQLVENFCRNPDGDEEGVWCYVAGKPGDFGYCDLNYCEEAMEEETGGGLDEDPDRAIEGRTATSEYQTFFDPRTFGSGEADCGLRPLFEKKSLEDKTERELLESYIDGRIVEGSDAEIGMSPWQVMLFRKSPQELLCGATLISDRWVLTAAHCLLYPPWDKNFTENDLLVRIGKHSRTRYERNIEKISMLEKIYIHPRYNWRENLDRDIALMKLKKPVAFSDYIHPVCLPDRETAASLLQAGYKGRVTGWGNLKETWTANVGKVQPSVLQVVNLPIVERPVCKDSTRIRITDNMFCAGYKPDEGKRGDACEGDSGGPFVMKSPFNNCWYQMGIVSWGEGCDRDGKYGFYTHVFRLKKWIQKVIDQFGE.

The N-terminal stretch at 1–24 (MAHVRGLQLPGCLALAALCTLVHS) is a signal peptide. Positions 25 to 43 (QHVFLAPQQALSLLQRVRR) are excised as a propeptide. The Gla domain occupies 44 to 90 (ANSVFLEEVRKGNLERECVEETCSYEEAFEALESSTATDVFWAKYTA). Glu50, Glu51, Glu58, Glu60, Glu63, Glu64, Glu69, Glu70, Glu73, and Glu76 each carry 4-carboxyglutamate. Cys61 and Cys66 are joined by a disulfide. Cystine bridges form between Cys91–Cys104, Cys109–Cys187, Cys130–Cys170, Cys158–Cys182, Cys214–Cys292, Cys235–Cys275, Cys263–Cys287, Cys337–Cys483, Cys392–Cys408, Cys537–Cys551, and Cys565–Cys595. Kringle domains lie at 108–187 (NCAE…IPVC) and 213–292 (QCVP…LNYC). 2 N-linked (GlcNAc...) asparagine glycosylation sites follow: Asn122 and Asn144. The 255-residue stretch at 365-619 (IVEGSDAEIG…LKKWIQKVID (255 aa)) folds into the Peptidase S1 domain. Catalysis depends on His407, which acts as the Charge relay system. An N-linked (GlcNAc...) asparagine glycan is attached at Asn417. The active-site Charge relay system is the Asp463. Residues 552–574 (AGYKPDEGKRGDACEGDSGGPFV) are high affinity receptor-binding region which also known as the TP508 peptide. Residue Ser569 is the Charge relay system of the active site.

It belongs to the peptidase S1 family. Heterodimer (named alpha-thrombin) of a light and a heavy chain; disulfide-linked. Forms a heterodimer with SERPINA5. In plasma, interacts (via N-terminus) with alpha-1-microglobulin; this interaction does not prevent the activation of prothrombin to thrombin. The gamma-carboxyglutamyl residues, which bind calcium ions, result from the carboxylation of glutamyl residues by a microsomal enzyme, the vitamin K-dependent carboxylase. The modified residues are necessary for the calcium-dependent interaction with a negatively charged phospholipid surface, which is essential for the conversion of prothrombin to thrombin. In terms of processing, in the penultimate step of the coagulation cascade, prothrombin is converted to thrombin by the prothrombinase complex composed of factor Xa (F10), cofactor Va (F5), and phospholipids. This activation requires factor Xa-catalyzed sequential cleavage at 2 sites, Arg-315 and Arg-364, along 2 possible pathways. In the first pathway, the first cleavage occurs at Arg-315, leading to the formation of the inactive intermediate prethrombin-2. This pathway preferentially occurs on platelets and in the absence of cofactor Va. In the second pathway, the first cleavage occurs at Arg-364, which separates protease domain into 2 chains that remain connected through a disulfide bond and generates the active intermediate meizothrombin. The presence of cofactor Va directs activation along the meizothrombin pathway and greatly accelerates the rate of cleavage at Arg-364, but has a smaller effect on the cleavage of meizothrombin at Arg-315. Meizothrombin accumulates as an intermediate when prothrombinase is assembled on the membrane of red blood cells.

It catalyses the reaction Selective cleavage of Arg-|-Gly bonds in fibrinogen to form fibrin and release fibrinopeptides A and B.. With respect to regulation, activity is promoted in the presence of negatively charged surfaces, such as polyphosphate and dextran sulfate. Inhibited by SERPINA5. Functionally, thrombin, which cleaves bonds after Arg and Lys, converts fibrinogen to fibrin and activates factors V, VII, VIII, XIII, and, in complex with thrombomodulin, protein C. Functions in blood homeostasis, inflammation and wound healing. Activates coagulation factor XI (F11); activation is promoted by the contact with negatively charged surfaces. Triggers the production of pro-inflammatory cytokines, such as MCP-1/CCL2 and IL8/CXCL8, in endothelial cells. The polypeptide is Prothrombin (F2) (Pongo abelii (Sumatran orangutan)).